The primary structure comprises 265 residues: Type 1 encapsulin shell protein (265 aa).

It belongs to the encapsulin family. Family 1 subfamily. Multimeric. The encapsulin nanocompartment is formed by 60 subunits. Monomers form pentamers which assemble to form shells. There are 12 pores where the pentamers meet as well as 3-fold axis channels and dimer channels; none are larger than 3-4 Angstroms in diameter. The N-terminus of the protein is inside the shell, the C-terminus is outside. In terms of processing, the initiator methionine is partially removed. When isolated from culture filtrate isoelectric focusing gives 3 bands, none of which are glycosylated.

It localises to the encapsulin nanocompartment. The protein localises to the secreted. Its subcellular location is the cell membrane. Its function is as follows. Shell component of a type 1 encapsulin nanocompartment in situ; its cargo protects against oxidative stress at low pH. In situ and in E.coli assembles into proteinaceous shells about 22 nm in diameter with 2.5 nm thick walls. Cargo proteins are targeted to the interior via their C-terminal extensions; empty intact shells can be isolated in E.coli in the absence of cargo protein. There are at least 4 possible cargo proteins, DyP (encoded in the same locus), FolB, BfrB and Rv1762c; DyP and Rv1762c have been identified in vivo. Probably involved in protection against oxidative damage from the host immune response. A T-cell antigen found in bacterial culture cell filtrates, stimulates mouse immune response. Does not have detectable bacteriocin activity. The sequence is that of Type 1 encapsulin shell protein from Mycobacterium tuberculosis (strain ATCC 25618 / H37Rv).